A 435-amino-acid polypeptide reads, in one-letter code: GPI-anchor transamidase component PIGU (435 aa).

The Cytoplasmic segment spans residues 2 to 3; it reads AA. Residues 4 to 22 traverse the membrane as a helical segment; the sequence is PLVLVLVVAVTVRAALFRS. The Lumenal segment spans residues 23 to 78; sequence SLAEFISERVEVVSPLSSWKRVVEGLSLLDLGVSPYSGAVFHETPLIIYLFHFLID. Residues 79 to 99 form a helical membrane-spanning segment; that stretch reads YAELVFMITDALTAIALYFAI. The Cytoplasmic portion of the chain corresponds to 100 to 136; sequence QDFNKVVFKKQKLLLELDQYAPDVAELIRTPMEMRYI. Helical transmembrane passes span 137–158, 159–178, 179–194, and 195–205; these read PLKV…VAKS, TCAI…IKGS, AFLS…YQSL, and YPLTLFVPGLL. Residues 206 to 222 are Cytoplasmic-facing; the sequence is YLLQRQYIPVKMKSKAF. The a cardiolipin site is built by lysine 216 and methionine 217. The chain crosses the membrane as a helical span at residues 223–244; the sequence is WIFSWEYAMMYVGSLVVIICLS. Over 245–286 the chain is Lumenal; sequence FFLLSSWDFIPAVYGFILSVPDLTPNIGLFWYFFAEMFEHFS. A helical membrane pass occupies residues 287–306; sequence LFFVCVFQINVFFYTIPLAI. Over 307–311 the chain is Cytoplasmic; the sequence is KLKEH. An a cardiolipin-binding site is contributed by lysine 309. 2 consecutive transmembrane segments (helical) span residues 312-331 and 332-345; these read PIFF…SYPT and VGDV…FPVW. Topologically, residues 346–354 are cytoplasmic; it reads NHLYRFLRN. The helical transmembrane segment at 355–372 threads the bilayer; the sequence is IFVLTCIIIVCSLLFPVL. The Lumenal portion of the chain corresponds to 373 to 384; that stretch reads WHLWIYAGSANS. Asparagine 383 and asparagine 385 together coordinate a 2-acyl-6-[6-phosphoethanolamine-alpha-D-mannosyl-(1-&gt;2)-6-phosphoethanolamine-alpha-D-mannosyl-(1-&gt;6)-2-phosphoethanolamine-alpha-D-mannosyl-(1-&gt;4)-alpha-D-glucosaminyl]-1-(1-radyl,2-acyl-sn-glycero-3-phospho)-1D-myo-inositol. The chain crosses the membrane as a helical span at residues 385 to 406; it reads NFFYAITLTFNVGQILLISDYF. Over 407 to 435 the chain is Cytoplasmic; sequence YAFLRREYYLTHGLYLTAKDGTEAMLVLK.

This sequence belongs to the PIGU family. Heteropentamer. Part of the GPI-anchor transamidase complex, consisting of PIGK, PIGT, PIGS, PIGU and GAA1.

The protein localises to the endoplasmic reticulum membrane. The protein operates within glycolipid biosynthesis; glycosylphosphatidylinositol-anchor biosynthesis. Functionally, component of the glycosylphosphatidylinositol-anchor (GPI-anchor) transamidase (GPI-T) complex that catalyzes the formation of the linkage between a proprotein and a GPI-anchor and participates in GPI anchored protein biosynthesis. Binds the lipid portion of GPI-anchor. May act as an organizer in the transmembrane layer to recruit other subunits, and thus is essential for assembly of the complex. This is GPI-anchor transamidase component PIGU from Homo sapiens (Human).